A 666-amino-acid polypeptide reads, in one-letter code: MTLQSQSSHCLNVHSSMVRDIEKCEQKTKRDIEKKNTKSGGVRLNSRRLIHGRVAEKGTKSLPSLTQVTFEGEELKLKSGSHYFKSLDDAIDFFDYMVRSRPFYTAVDCNKVIGVFVRMNRPDVAISLYRKMEIRRIPLNIYSFNILIKCFCDCHKLSFSLSTFGKLTKLGFQPDVVTFNTLLHGLCLEDRISEALALFGYMVETGFLEAVALFDQMVEIGLTPVVITFNTLINGLCLEGRVLEAAALVNKMVGKGLHIDVVTYGTIVNGMCKMGDTKSALNLLSKMEETHIKPDVVIYSAIIDRLCKDGHHSDAQYLFSEMLEKGIAPNVFTYNCMIDGFCSFGRWSDAQRLLRDMIEREINPDVLTFNALISASVKEGKLFEAEKLCDEMLHRCIFPDTVTYNSMIYGFCKHNRFDDAKHMFDLMASPDVVTFNTIIDVYCRAKRVDEGMQLLREISRRGLVANTTTYNTLIHGFCEVDNLNAAQDLFQEMISHGVCPDTITCNILLYGFCENEKLEEALELFEVIQMSKIDLDTVAYNIIIHGMCKGSKVDEAWDLFCSLPIHGVEPDVQTYNVMISGFCGKSAISDANVLFHKMKDNGHEPDNSTYNTLIRGCLKAGEIDKSIELISEMRSNGFSGDAFTIKMVADLITDGRLDKSFSDMLS.

15 PPR repeats span residues 105-139, 140-174, 175-209, 225-259, 260-294, 295-329, 330-364, 365-399, 400-430, 431-465, 466-500, 501-535, 536-570, 571-605, and 606-640; these read TAVD…RIPL, NIYS…GFQP, DVVT…GFLE, VVIT…GLHI, DVVT…HIKP, DVVI…GIAP, NVFT…EINP, DVLT…CIFP, DTVT…MASP, DVVT…GLVA, NTTT…GVCP, DTIT…KIDL, DTVA…GVEP, DVQT…GHEP, and DNST…GFSG.

This sequence belongs to the PPR family. P subfamily.

The protein is Pentatricopeptide repeat-containing protein At1g64100 of Arabidopsis thaliana (Mouse-ear cress).